Consider the following 184-residue polypeptide: Holliday junction branch migration complex subunit RuvA (184 aa).

Positions 1-64 are domain I; it reads MIRAIEGIIT…EDANLLYGFL (64 aa). The segment at 65–144 is domain II; it reads DTNEQKMFEM…SDESVPGYQN (80 aa). Position 144 (Asn144) is a region of interest, flexible linker. Residues 144–184 form a domain III region; the sequence is NEALLALEALGFKREKIVKILPDLKSTSTSELVKEALKKLA.

It belongs to the RuvA family. Homotetramer. Forms an RuvA(8)-RuvB(12)-Holliday junction (HJ) complex. HJ DNA is sandwiched between 2 RuvA tetramers; dsDNA enters through RuvA and exits via RuvB. An RuvB hexamer assembles on each DNA strand where it exits the tetramer. Each RuvB hexamer is contacted by two RuvA subunits (via domain III) on 2 adjacent RuvB subunits; this complex drives branch migration. In the full resolvosome a probable DNA-RuvA(4)-RuvB(12)-RuvC(2) complex forms which resolves the HJ.

Its subcellular location is the cytoplasm. Its function is as follows. The RuvA-RuvB-RuvC complex processes Holliday junction (HJ) DNA during genetic recombination and DNA repair, while the RuvA-RuvB complex plays an important role in the rescue of blocked DNA replication forks via replication fork reversal (RFR). RuvA specifically binds to HJ cruciform DNA, conferring on it an open structure. The RuvB hexamer acts as an ATP-dependent pump, pulling dsDNA into and through the RuvAB complex. HJ branch migration allows RuvC to scan DNA until it finds its consensus sequence, where it cleaves and resolves the cruciform DNA. The protein is Holliday junction branch migration complex subunit RuvA of Campylobacter curvus (strain 525.92).